The following is a 204-amino-acid chain: Gellan lyase (204 aa).

As to quaternary structure, multimer.

The protein localises to the secreted. It catalyses the reaction Eliminative cleavage of beta-D-glucopyranosyl-(1-&gt;4)-beta-D-glucopyranosyluronate bonds of gellan backbone releasing tetrasaccharides containing a 4-deoxy-4,5-unsaturated D-glucopyranosyluronic acid at the non-reducing end. The tetrasaccharide produced from deacetylated gellan is beta-D-4-deoxy-Delta(4)-GlcAp-(1-&gt;4)-beta-D-Glcp-(1-&gt;4)-alpha-L-Rhap-(1-&gt;3)-beta-D-Glcp.. Its activity is regulated as follows. Activity is stimulated by zinc, potassium, lithium, cobalt, sodium, calcium, iron, manganase, magnesium and mercury ions at a concentration of 1 mM, but inhibited by copper ions at a concentration of 1 mM. Activity is inhibited by potassium, sodium and magnesium ions at a concentration of 1 M. Activity is inhibited by urea, EDTA, dithiothreitol, p-CMB, PSF, natrium lauryl sulfate and N-bromosuccinimide. Its function is as follows. Cleaves the glycosidic bonds of gellan backbone and releases tetrasaccharide units of glucuronyl-glucosyl-rhamnosyl-glucose with unsaturated glucuronic acid at the non-reducing terminal. The enzyme is highly specific to the heteropolysaccharide gellan. The chain is Gellan lyase from Geobacillus stearothermophilus (Bacillus stearothermophilus).